The chain runs to 680 residues: Penicillin-binding protein 2B (680 aa).

Over 1 to 8 (MRKFNSHS) the chain is Cytoplasmic. A helical transmembrane segment spans residues 9-29 (IPIRLNLLFSIVILLFMTIIG). Topologically, residues 30–680 (RLLYMQVLNK…NLYQKYHPMN (651 aa)) are extracellular. Ser-386 (acyl-ester intermediate) is an active-site residue.

This sequence belongs to the transpeptidase family. Interacts with MreC in the elongasome.

The protein resides in the cell membrane. Its function is as follows. A transpeptidase that forms peptide cross-links between adjacent glycan strands in cell wall peptidoglycan (PG). Part of the elongasome machinery that synthesizes peripheral PG. This chain is Penicillin-binding protein 2B, found in Streptococcus pneumoniae serotype 2 (strain D39 / NCTC 7466).